The sequence spans 410 residues: Glycylpeptide N-tetradecanoyltransferase (410 aa).

Residues F30, W31, F162, L163, C164, V165, S171, R173, L174, and A175 each coordinate tetradecanoyl-CoA.

This sequence belongs to the NMT family. In terms of assembly, heterodimer composed of NMT and AK2; AK2 myristoylation stabilizes the complex.

The protein resides in the cytoplasm. The enzyme catalyses N-terminal glycyl-[protein] + tetradecanoyl-CoA = N-tetradecanoylglycyl-[protein] + CoA + H(+). In terms of biological role, adds a myristoyl group to the N-terminal glycine residue of certain cellular proteins. Myristoylates adenylate kinase AK2. During the asexual blood stage, may myristoylate proteins such as ARO, CDPK1 and GAP45. Probably by mediating protein myristoylation, plays a role in the assembly of the inner membrane complex during the early stages of schizogony and in the formation of rhoptries in the late stages and thus merozoite egress. This Plasmodium falciparum (isolate 3D7) protein is Glycylpeptide N-tetradecanoyltransferase.